The primary structure comprises 101 residues: Large ribosomal subunit protein eL21 (101 aa).

Residues 1-18 (MVKHSRGYRTRSRSLLRK) are compositionally biased toward basic residues. The segment at 1–23 (MVKHSRGYRTRSRSLLRKSPRER) is disordered.

Belongs to the eukaryotic ribosomal protein eL21 family.

The protein is Large ribosomal subunit protein eL21 of Saccharolobus islandicus (strain Y.G.57.14 / Yellowstone #1) (Sulfolobus islandicus).